A 504-amino-acid polypeptide reads, in one-letter code: Apoptosis inhibitor 5 (504 aa).

The tract at residues Met1–Phe360 is ARM-like and Heat-like helical repeats. Lys251 is modified (N6-acetyllysine). The leucine-zipper stretch occupies residues Leu370–Leu391. Thr399 carries the post-translational modification Phosphothreonine. Positions Gly452–Lys504 are disordered. The Nuclear localization signal signature appears at Lys454 to Arg475. Phosphoserine is present on residues Ser462, Ser464, and Ser469. Residues Ser462–Gly472 are compositionally biased toward low complexity. The span at Lys487–Lys504 shows a compositional bias: polar residues.

This sequence belongs to the API5 family. As to quaternary structure, monomer. Interacts with FGF2 and ACIN1. Acetylation at Lys-251 impairs antiapoptotic function.

It localises to the nucleus. It is found in the cytoplasm. Antiapoptotic factor that may have a role in protein assembly. Negatively regulates ACIN1. By binding to ACIN1, it suppresses ACIN1 cleavage from CASP3 and ACIN1-mediated DNA fragmentation. Also known to efficiently suppress E2F1-induced apoptosis. The chain is Apoptosis inhibitor 5 (API5) from Pongo abelii (Sumatran orangutan).